The chain runs to 254 residues: D-aminoacyl-tRNA deacylase (254 aa).

The interval 61–83 (KPTLTVHTPGNLTEDNSHGGNPE) is disordered. Over residues 65-74 (TVHTPGNLTE) the composition is skewed to polar residues.

The protein belongs to the DtdA deacylase family. In terms of assembly, monomer. Requires Zn(2+) as cofactor.

It catalyses the reaction a D-aminoacyl-tRNA + H2O = a tRNA + a D-alpha-amino acid + H(+). The catalysed reaction is glycyl-tRNA(Ala) + H2O = tRNA(Ala) + glycine + H(+). Its function is as follows. D-aminoacyl-tRNA deacylase with broad substrate specificity. By recycling D-aminoacyl-tRNA to D-amino acids and free tRNA molecules, this enzyme counteracts the toxicity associated with the formation of D-aminoacyl-tRNA entities in vivo. This Methanococcus maripaludis (strain C7 / ATCC BAA-1331) protein is D-aminoacyl-tRNA deacylase.